A 288-amino-acid polypeptide reads, in one-letter code: Hypersensitive-induced response protein-like protein 1 (288 aa).

The N-myristoyl glycine moiety is linked to residue Gly2.

Functionally, positive regulator of hypersensitive response (HR)-like cell death. May be involved in potassium ion channel regulation. The sequence is that of Hypersensitive-induced response protein-like protein 1 from Oryza sativa subsp. japonica (Rice).